Consider the following 368-residue polypeptide: Flavanone 3-dioxygenase (368 aa).

Positions 191–295 constitute a Fe2OG dioxygenase domain; that stretch reads CVDMDQKVIV…RMSIATFQNP (105 aa). Residues H218, D220, and H276 each coordinate Fe cation. A 2-oxoglutarate-binding site is contributed by R286.

This sequence belongs to the iron/ascorbate-dependent oxidoreductase family. It depends on Fe(2+) as a cofactor. The cofactor is L-ascorbate.

It carries out the reaction a (2S)-flavan-4-one + 2-oxoglutarate + O2 = a (2R,3R)-dihydroflavonol + succinate + CO2. It functions in the pathway secondary metabolite biosynthesis; flavonoid biosynthesis. Its function is as follows. Involved in the conversion of (2S)-naringenin to (+)-(2R/3R)-dihydrokaempferol. The chain is Flavanone 3-dioxygenase (FHT) from Petroselinum crispum (Parsley).